The sequence spans 390 residues: Protein dom34 (390 aa).

The protein belongs to the eukaryotic release factor 1 family. Pelota subfamily. Component of the Dom34-Hbs1 complex, also named Pelota-HBS1L complex, composed of dom34 and hbs1. A divalent metal cation is required as a cofactor.

It is found in the cytoplasm. Its function is as follows. Component of the Dom34-Hbs1 complex, a complex that recognizes stalled ribosomes and triggers the No-Go Decay (NGD) pathway. In the Dom34-Hbs1 complex, dom34 recognizes ribosomes stalled at the 3' end of an mRNA and engages stalled ribosomes by destabilizing mRNA in the mRNA channel. Following ribosome-binding, the Dom34-Hbs1 complex promotes the disassembly of stalled ribosomes, followed by degradation of damaged mRNAs as part of the NGD pathway. This chain is Protein dom34, found in Schizosaccharomyces pombe (strain 972 / ATCC 24843) (Fission yeast).